The following is a 119-amino-acid chain: Probable non-functional T cell receptor gamma variable 10 (119 aa).

Positions 1–19 (MSLLEAFAFSSWALGLGLS) are cleaved as a signal peptide. Positions 24–119 (FQLSISTEVK…MAVYYCAAWD (96 aa)) constitute an Ig-like domain. A disulfide bridge connects residues cysteine 40 and cysteine 115.

In terms of assembly, gamma-delta TR is a heterodimer composed of a gamma and delta chain; disulfide-linked. The gamma-delta TR is associated with the transmembrane signaling CD3 coreceptor proteins following the stoichiometry: a single gamma-delta TR heterodimer associates with one CD3D-CD3E heterodimer, one CD3G-CD3E heterodimer and one CD247 homodimer forming a stable octameric structure. Upon activation, gamma-delta TR complex associates with FCER1G to initiate intracellular signaling.

Its subcellular location is the cell membrane. Its function is as follows. Probable non-functional open reading frame (ORF) of V region of the variable domain of T cell receptor (TR) gamma chain. Non-functional ORF generally cannot participate in the synthesis of a productive T cell receptor (TR) chain due to altered V-(D)-J or switch recombination and/or splicing site (at mRNA level) and/or conserved amino acid change (protein level). Gamma-delta TRs recognize a variety of self and foreign non-peptide antigens frequently expressed at the epithelial boundaries between the host and external environment, including endogenous lipids presented by MH-like protein CD1D and phosphoantigens presented by butyrophilin-like molecule BTN3A1. Upon antigen recognition induces rapid, innate-like immune responses involved in pathogen clearance and tissue repair. Binding of gamma-delta TR complex to antigen triggers phosphorylation of immunoreceptor tyrosine-based activation motifs (ITAMs) in the CD3 chains by the LCK and FYN kinases, allowing the recruitment, phosphorylation, and activation of ZAP70 that facilitates phosphorylation of the scaffolding proteins LCP2 and LAT. This lead to the formation of a supramolecular signalosome that recruits the phospholipase PLCG1, resulting in calcium mobilization and ERK activation, ultimately leading to T cell expansion and differentiation into effector cells. Gamma-delta TRs are produced through somatic rearrangement of a limited repertoire of variable (V), diversity (D), and joining (J) genes. The potential diversity of gamma-delta TRs is conferred by the unique ability to rearrange (D) genes in tandem and to utilize all three reading frames. The combinatorial diversity is considerably increased by the sequence exonuclease trimming and random nucleotide (N) region additions which occur during the V-(D)-J rearrangements. The protein is Probable non-functional T cell receptor gamma variable 10 of Homo sapiens (Human).